An 80-amino-acid chain; its full sequence is Metallothionein-like protein 2B (80 aa).

The protein belongs to the metallothionein superfamily. Type 15 family. In terms of tissue distribution, highly expressed in stems. Expressed in leaves and rachis.

Its function is as follows. Metallothioneins have a high content of cysteine residues that bind various heavy metals. This Oryza sativa subsp. japonica (Rice) protein is Metallothionein-like protein 2B (MT2B).